Here is a 462-residue protein sequence, read N- to C-terminus: Semenogelin-1 (462 aa).

An N-terminal signal peptide occupies residues 1-23 (MKPNIIFVLSLLLILEKQAAVMG). At Gln24 the chain carries Pyrrolidone carboxylic acid. The disordered stretch occupies residues 24–61 (QKGGSKGRLPSEFSQFPHGQKGQHYSGQKGKQQTESKG). Over residues 46-61 (QHYSGQKGKQQTESKG) the composition is skewed to polar residues. Tandem repeats lie at residues 70–129 (HVDA…VVIH), 141–200 (NPSQ…QTEE), and 201–260 (LVAN…QDEL). The repeat-rich region stretch occupies residues 70-439 (HVDANDHDQS…SHGGLDIVII (370 aa)). Disordered regions lie at residues 131–157 (KGGK…GISS) and 173–194 (KEQT…QSSY). The segment covering 138-157 (GTQNPSQDQGNSPSGKGISS) has biased composition (polar residues). Positions 164-283 (ERLWVHGLSK…NQDQQHGRKA (120 aa)) are interaction with EPPIN. The interval 261–380 (LVYNKNQHQT…QRSIYSQTEK (120 aa)) is 2 X 60 AA tandem repeats, type 1. The tract at residues 270-432 (TKNLNQDQQH…KGRHQHGSHG (163 aa)) is disordered. Composition is skewed to polar residues over residues 308-317 (DVSQSSIYSQ), 324-335 (GKSQKQITIPSQ), and 343-352 (ANKISYQSSS). The 3-2 repeat unit spans residues 381-439 (LVAGKSQIQAPNPKQEPWHGENAKGESGQSTNREQDLLSHEQKGRHQHGSHGGLDIVII). Residues 413–424 (REQDLLSHEQKG) are compositionally biased toward basic and acidic residues.

It belongs to the semenogelin family. Occurs in disulfide-linked complexes which may also contain two less abundant 71- and 76-kDa semenogelin-related polypeptides. Interacts with EPPIN (via C-terminus); Cys-239 is a critical amino acid for both binding to EPPIN. In terms of processing, transglutaminase substrate. Post-translationally, rapidly cleaved after ejaculation by KLK3/PSA, resulting in liquefaction of the semen coagulum and the progressive release of motile spermatozoa. In terms of tissue distribution, seminal vesicle.

It is found in the secreted. Predominant protein in semen. It participates in the formation of a gel matrix entrapping the accessory gland secretions and ejaculated spermatozoa. Fragments of semenogelin and/or fragments of the related proteins may contribute to the activation of progressive sperm movements as the gel-forming proteins are fragmented by KLK3/PSA. In terms of biological role, alpha-inhibin-92 and alpha-inhibin-31, derived from the proteolytic degradation of semenogelin, inhibit the secretion of pituitary follicle-stimulating hormone. The protein is Semenogelin-1 (SEMG1) of Homo sapiens (Human).